Reading from the N-terminus, the 287-residue chain is MAAPIVDAEYLKEITKARRELRSLIANKNCAPIMLRLAWHDAGTYDAQSKTGGPNGSIRNEEEHTHGANSGLKIALDLCEGVKAKHPKITYADLYQLAGVVAVEVTGGPDIVFVPGRKDSNVCPKEGRLPDAKQGFQHLRDVFYRMGLSDKDIVALSGGHTLGRAHPERSGFDGPWTQEPLKFDNSYFVELLKGESEGLLKLPTDKTLLEDPEFRRLVELYAKDEDAFFRDYAESHKKLSELGFNPNSSAGKAVADSTILAQSAFGVAVAAAVVAFGYFYEIRKRMK.

The residue at position 2 (Ala2) is an N-acetylalanine. The active-site Proton acceptor is the His40. The disordered stretch occupies residues 46–66 (DAQSKTGGPNGSIRNEEEHTH). Heme b is bound at residue His160. The K(+) site is built by Thr161, Thr177, and Asp184. Residues 259 to 279 (ILAQSAFGVAVAAAVVAFGYF) form a helical membrane-spanning segment. Positions 281–287 (EIRKRMK) match the AKR2A-binding sequence (ABS) required for peroxisome membrane targeting motif.

The protein belongs to the peroxidase family. Ascorbate peroxidase subfamily. In terms of assembly, interacts via its C-terminal region with AKR2A and AKR2B. The cofactor is heme b.

It is found in the peroxisome membrane. It localises to the glyoxysome membrane. It carries out the reaction L-ascorbate + H2O2 = L-dehydroascorbate + 2 H2O. Functionally, plays a key role in hydrogen peroxide removal. In Arabidopsis thaliana (Mouse-ear cress), this protein is L-ascorbate peroxidase 3 (APX3).